The chain runs to 1190 residues: DNA-directed RNA polymerase subunit beta (1190 aa).

It belongs to the RNA polymerase beta chain family. As to quaternary structure, the RNAP catalytic core consists of 2 alpha, 1 beta, 1 beta' and 1 omega subunit. When a sigma factor is associated with the core the holoenzyme is formed, which can initiate transcription.

It carries out the reaction RNA(n) + a ribonucleoside 5'-triphosphate = RNA(n+1) + diphosphate. DNA-dependent RNA polymerase catalyzes the transcription of DNA into RNA using the four ribonucleoside triphosphates as substrates. This Streptococcus suis (strain 98HAH33) protein is DNA-directed RNA polymerase subunit beta.